A 239-amino-acid chain; its full sequence is 7-cyano-7-deazaguanine synthase (239 aa).

8 to 18 (FSGGLDSTACL) contributes to the ATP binding site. Residues Cys-194, Cys-209, Cys-212, and Cys-215 each coordinate Zn(2+).

Belongs to the QueC family. Zn(2+) is required as a cofactor.

It catalyses the reaction 7-carboxy-7-deazaguanine + NH4(+) + ATP = 7-cyano-7-deazaguanine + ADP + phosphate + H2O + H(+). It functions in the pathway purine metabolism; 7-cyano-7-deazaguanine biosynthesis. Catalyzes the ATP-dependent conversion of 7-carboxy-7-deazaguanine (CDG) to 7-cyano-7-deazaguanine (preQ(0)). In Pyrococcus horikoshii (strain ATCC 700860 / DSM 12428 / JCM 9974 / NBRC 100139 / OT-3), this protein is 7-cyano-7-deazaguanine synthase.